Reading from the N-terminus, the 638-residue chain is 9-cis-epoxycarotenoid dioxygenase NCED1, chloroplastic (638 aa).

The N-terminal 80 residues, 1-80 (MQRICPAHCS…QTEQEDEQLV (80 aa)), are a transit peptide targeting the chloroplast. 3 stretches are compositionally biased toward low complexity: residues 28-37 (AASAAPQSPS), 44-69 (ASAA…TRTP), and 92-102 (TTNGRAAPSQS). Disordered stretches follow at residues 28-80 (AASA…EQLV) and 92-113 (TTNG…PAAA). His331, His380, His446, and His624 together coordinate Fe cation.

It belongs to the carotenoid oxygenase family. Fe(2+) is required as a cofactor.

It localises to the plastid. The protein localises to the chloroplast. It catalyses the reaction a 9-cis-epoxycarotenoid + O2 = a 12'-apo-carotenal + 2-cis,4-trans-xanthoxin. It carries out the reaction 9-cis-violaxanthin + O2 = (3S,5R,6S)-5,6-epoxy-3-hydroxy-5,6-dihydro-12'-apo-beta-caroten-12'-al + 2-cis,4-trans-xanthoxin. The catalysed reaction is 9'-cis-neoxanthin + O2 = (3S,5R,6R)-3,5-dihydroxy-6,7-didehydro-5,6-dihydro-12'-apo-beta-caroten-12'-al + 2-cis,4-trans-xanthoxin. Functionally, has a 11,12(11',12') 9-cis epoxycarotenoid cleavage activity. Catalyzes the first step of abscisic-acid biosynthesis from carotenoids. In Oryza sativa subsp. japonica (Rice), this protein is 9-cis-epoxycarotenoid dioxygenase NCED1, chloroplastic.